Here is a 556-residue protein sequence, read N- to C-terminus: Adenine deaminase (556 aa).

It belongs to the metallo-dependent hydrolases superfamily. Adenine deaminase family. Mn(2+) serves as cofactor.

The catalysed reaction is adenine + H2O + H(+) = hypoxanthine + NH4(+). This is Adenine deaminase from Archaeoglobus fulgidus (strain ATCC 49558 / DSM 4304 / JCM 9628 / NBRC 100126 / VC-16).